Reading from the N-terminus, the 346-residue chain is tRNA N6-adenosine threonylcarbamoyltransferase (346 aa).

Residues His111 and His115 each contribute to the Fe cation site. Substrate-binding positions include 134 to 138, Asp167, Gly180, and Asn279; that span reads LVSGG. Asp307 is a Fe cation binding site.

Belongs to the KAE1 / TsaD family. It depends on Fe(2+) as a cofactor.

Its subcellular location is the cytoplasm. It catalyses the reaction L-threonylcarbamoyladenylate + adenosine(37) in tRNA = N(6)-L-threonylcarbamoyladenosine(37) in tRNA + AMP + H(+). Its function is as follows. Required for the formation of a threonylcarbamoyl group on adenosine at position 37 (t(6)A37) in tRNAs that read codons beginning with adenine. Is involved in the transfer of the threonylcarbamoyl moiety of threonylcarbamoyl-AMP (TC-AMP) to the N6 group of A37, together with TsaE and TsaB. TsaD likely plays a direct catalytic role in this reaction. This is tRNA N6-adenosine threonylcarbamoyltransferase from Burkholderia mallei (strain ATCC 23344).